The chain runs to 195 residues: Imidazoleglycerol-phosphate dehydratase (195 aa).

Belongs to the imidazoleglycerol-phosphate dehydratase family.

Its subcellular location is the cytoplasm. It catalyses the reaction D-erythro-1-(imidazol-4-yl)glycerol 3-phosphate = 3-(imidazol-4-yl)-2-oxopropyl phosphate + H2O. Its pathway is amino-acid biosynthesis; L-histidine biosynthesis; L-histidine from 5-phospho-alpha-D-ribose 1-diphosphate: step 6/9. This chain is Imidazoleglycerol-phosphate dehydratase, found in Desulfosudis oleivorans (strain DSM 6200 / JCM 39069 / Hxd3) (Desulfococcus oleovorans).